A 64-amino-acid polypeptide reads, in one-letter code: Ferredoxin-2 (64 aa).

The 4Fe-4S ferredoxin-type domain maps to Arg2–Glu29. Cys10, Cys16, and Cys55 together coordinate [3Fe-4S] cluster.

Requires [3Fe-4S] cluster as cofactor.

Functionally, electron transport protein for the cytochrome P-450-SU2 system. The polypeptide is Ferredoxin-2 (subB) (Streptomyces griseolus).